Consider the following 199-residue polypeptide: Cytochrome c oxidase subunit 2 (199 aa).

The helical transmembrane segment at 1-13 threads the bilayer; that stretch reads AICSLVLYLLSLM. The Mitochondrial matrix segment spans residues 14 to 26; it reads LMEKLSSNTVDAQ. Residues 27 to 54 traverse the membrane as a helical segment; the sequence is EVELIWTILPAIVLILLALPSLQILYMM. The Mitochondrial intermembrane segment spans residues 55–199; the sequence is DEIDEPDLTL…SSLLSSSSSL (145 aa). Positions 128, 163, 165, 167, 171, and 174 each coordinate Cu cation. E165 serves as a coordination point for Mg(2+).

It belongs to the cytochrome c oxidase subunit 2 family. As to quaternary structure, component of the cytochrome c oxidase (complex IV, CIV), a multisubunit enzyme composed of 14 subunits. The complex is composed of a catalytic core of 3 subunits MT-CO1, MT-CO2 and MT-CO3, encoded in the mitochondrial DNA, and 11 supernumerary subunits COX4I, COX5A, COX5B, COX6A, COX6B, COX6C, COX7A, COX7B, COX7C, COX8 and NDUFA4, which are encoded in the nuclear genome. The complex exists as a monomer or a dimer and forms supercomplexes (SCs) in the inner mitochondrial membrane with NADH-ubiquinone oxidoreductase (complex I, CI) and ubiquinol-cytochrome c oxidoreductase (cytochrome b-c1 complex, complex III, CIII), resulting in different assemblies (supercomplex SCI(1)III(2)IV(1) and megacomplex MCI(2)III(2)IV(2)). Found in a complex with TMEM177, COA6, COX18, COX20, SCO1 and SCO2. Interacts with TMEM177 in a COX20-dependent manner. Interacts with COX20. Interacts with COX16. Cu cation serves as cofactor.

It is found in the mitochondrion inner membrane. The enzyme catalyses 4 Fe(II)-[cytochrome c] + O2 + 8 H(+)(in) = 4 Fe(III)-[cytochrome c] + 2 H2O + 4 H(+)(out). Component of the cytochrome c oxidase, the last enzyme in the mitochondrial electron transport chain which drives oxidative phosphorylation. The respiratory chain contains 3 multisubunit complexes succinate dehydrogenase (complex II, CII), ubiquinol-cytochrome c oxidoreductase (cytochrome b-c1 complex, complex III, CIII) and cytochrome c oxidase (complex IV, CIV), that cooperate to transfer electrons derived from NADH and succinate to molecular oxygen, creating an electrochemical gradient over the inner membrane that drives transmembrane transport and the ATP synthase. Cytochrome c oxidase is the component of the respiratory chain that catalyzes the reduction of oxygen to water. Electrons originating from reduced cytochrome c in the intermembrane space (IMS) are transferred via the dinuclear copper A center (CU(A)) of subunit 2 and heme A of subunit 1 to the active site in subunit 1, a binuclear center (BNC) formed by heme A3 and copper B (CU(B)). The BNC reduces molecular oxygen to 2 water molecules using 4 electrons from cytochrome c in the IMS and 4 protons from the mitochondrial matrix. The sequence is that of Cytochrome c oxidase subunit 2 (MT-CO2) from Rhea americana (Greater rhea).